The primary structure comprises 126 residues: Large ribosomal subunit protein bL12 (126 aa).

This sequence belongs to the bacterial ribosomal protein bL12 family. Homodimer. Part of the ribosomal stalk of the 50S ribosomal subunit. Forms a multimeric L10(L12)X complex, where L10 forms an elongated spine to which 2 to 4 L12 dimers bind in a sequential fashion. Binds GTP-bound translation factors.

Its function is as follows. Forms part of the ribosomal stalk which helps the ribosome interact with GTP-bound translation factors. Is thus essential for accurate translation. The chain is Large ribosomal subunit protein bL12 from Desulforudis audaxviator (strain MP104C).